The following is a 693-amino-acid chain: Probable L-type lectin-domain containing receptor kinase VI.1 (693 aa).

An N-terminal signal peptide occupies residues 1–22; that stretch reads MGIARSINSFMFFFFLMILSNA. 7 N-linked (GlcNAc...) asparagine glycosylation sites follow: N21, N44, N71, N89, N141, N180, and N223. Residues 23-311 lie on the Extracellular side of the membrane; it reads SKSSVLAEAT…SNKKGYNSQV (289 aa). Residues 33–279 form a legume-lectin like region; it reads TAKFTFIGFK…AHYVMGWSFS (247 aa). A helical transmembrane segment spans residues 312–332; sequence IVLIVALSIVTLVLLVLLFIF. Residues 333–693 are Cytoplasmic-facing; that stretch reads VMYKRRIQEE…VSSSSIVSGR (361 aa). The 275-residue stretch at 368 to 642 folds into the Protein kinase domain; the sequence is FKESEIIGTG…LRYLNGEENV (275 aa). Residues 374–382 and K396 contribute to the ATP site; that span reads IGTGGFGIV. D495 (proton acceptor) is an active-site residue. The tract at residues 670 to 693 is disordered; that stretch reads DRASSSNTFSSFSNVSSSSIVSGR.

This sequence in the C-terminal section; belongs to the protein kinase superfamily. Ser/Thr protein kinase family. In the N-terminal section; belongs to the leguminous lectin family.

The protein localises to the cell membrane. It carries out the reaction L-seryl-[protein] + ATP = O-phospho-L-seryl-[protein] + ADP + H(+). The catalysed reaction is L-threonyl-[protein] + ATP = O-phospho-L-threonyl-[protein] + ADP + H(+). The protein is Probable L-type lectin-domain containing receptor kinase VI.1 (LECRK61) of Arabidopsis thaliana (Mouse-ear cress).